Here is a 305-residue protein sequence, read N- to C-terminus: Superkiller complex protein 8 (305 aa).

Met-1 carries the N-acetylmethionine modification. Position 2 is an N-acetylthreonine; in WD repeat-containing protein 61, N-terminally processed (Thr-2). WD repeat units follow at residues 14 to 57 (AHDD…LELQ), 62 to 101 (GHQL…QMKS), 104 to 143 (AGPV…KEYS), 146 to 187 (TRGK…HTLE), 188 to 227 (GHAM…LAGT), 230 to 269 (GHAS…CIHT), and 272 to 305 (DHQD…DCPI).

The protein belongs to the SKI8 family. Component of the PAF1 complex, which consists of CDC73, PAF1, LEO1, CTR9, RTF1 and SKIC8. The PAF1 complex interacts with PHF5A. Within the PAF1 complex interacts directly with PHF5A. Component of the SKI complex which consists of SKIC2, SKIC3 and SKIC8.

The protein resides in the nucleus. It is found in the cytoplasm. Its function is as follows. Component of the PAF1 complex (PAF1C) which has multiple functions during transcription by RNA polymerase II and is implicated in regulation of development and maintenance of embryonic stem cell pluripotency. PAF1C associates with RNA polymerase II through interaction with POLR2A CTD non-phosphorylated and 'Ser-2'- and 'Ser-5'-phosphorylated forms and is involved in transcriptional elongation, acting both independently and synergistically with TCEA1 and in cooperation with the DSIF complex and HTATSF1. PAF1C is required for transcription of Hox and Wnt target genes. PAF1C is involved in hematopoiesis and stimulates transcriptional activity of KMT2A/MLL1; it promotes leukemogenesis through association with KMT2A/MLL1-rearranged oncoproteins, such as KMT2A/MLL1-MLLT3/AF9 and KMT2A/MLL1-MLLT1/ENL. PAF1C is involved in histone modifications such as ubiquitination of histone H2B and methylation on histone H3 'Lys-4' (H3K4me3). PAF1C recruits the RNF20/40 E3 ubiquitin-protein ligase complex and the E2 enzyme UBE2A or UBE2B to chromatin which mediate monoubiquitination of 'Lys-120' of histone H2B (H2BK120ub1); UB2A/B-mediated H2B ubiquitination is proposed to be coupled to transcription. PAF1C is involved in mRNA 3' end formation probably through association with cleavage and poly(A) factors. In case of infection by influenza A strain H3N2, PAF1C associates with viral NS1 protein, thereby regulating gene transcription. Required for mono- and trimethylation on histone H3 'Lys-4' (H3K4me3), dimethylation on histone H3 'Lys-79' (H3K4me3). Required for Hox gene transcription. Also acts as a component of the SKI complex, a multiprotein complex that assists the RNA-degrading exosome during the mRNA decay and quality-control pathways. The SKI complex catalyzes mRNA extraction from 80S ribosomal complexes in the 3'-5' direction and channels mRNA to the cytosolic exosome for degradation. SKI-mediated extraction of mRNA from stalled ribosomes allow binding of the Pelota-HBS1L complex and subsequent ribosome disassembly by ABCE1 for ribosome recycling. The sequence is that of Superkiller complex protein 8 (Skic8) from Rattus norvegicus (Rat).